A 98-amino-acid chain; its full sequence is MHLARNPALKSIYIKIRKRKTMSIGTALALSAPFAVGLAALGSGLGLGRAVSSAMEAIGRQPEASGKILTTMIIGAALIEALTIYALIVFFVVLEKMA.

2 helical membrane passes run 27–47 (ALALSAPFAVGLAALGSGLGL) and 73–93 (IIGAALIEALTIYALIVFFVV).

This sequence belongs to the ATPase C chain family. As to quaternary structure, F-type ATPases have 2 components, F(1) - the catalytic core - and F(0) - the membrane proton channel. F(1) has five subunits: alpha(3), beta(3), gamma(1), delta(1), epsilon(1). F(0) has three main subunits: a(1), b(2) and c(10-14). The alpha and beta chains form an alternating ring which encloses part of the gamma chain. F(1) is attached to F(0) by a central stalk formed by the gamma and epsilon chains, while a peripheral stalk is formed by the delta and b chains.

The protein resides in the cell inner membrane. Its function is as follows. F(1)F(0) ATP synthase produces ATP from ADP in the presence of a proton or sodium gradient. F-type ATPases consist of two structural domains, F(1) containing the extramembraneous catalytic core and F(0) containing the membrane proton channel, linked together by a central stalk and a peripheral stalk. During catalysis, ATP synthesis in the catalytic domain of F(1) is coupled via a rotary mechanism of the central stalk subunits to proton translocation. In terms of biological role, key component of the F(0) channel; it plays a direct role in translocation across the membrane. A homomeric c-ring of between 10-14 subunits forms the central stalk rotor element with the F(1) delta and epsilon subunits. The polypeptide is ATP synthase subunit c (Protochlamydia amoebophila (strain UWE25)).